Reading from the N-terminus, the 142-residue chain is Putative pre-16S rRNA nuclease (142 aa).

Belongs to the YqgF nuclease family.

Its subcellular location is the cytoplasm. Its function is as follows. Could be a nuclease involved in processing of the 5'-end of pre-16S rRNA. This Prosthecochloris aestuarii (strain DSM 271 / SK 413) protein is Putative pre-16S rRNA nuclease.